The primary structure comprises 700 residues: Probable E3 ubiquitin ligase complex SCF subunit sconB (700 aa).

Residues 195-241 (IDFLTALPPEISFKILCYLDTTSLCKAAQVSRRWRALADDDVVWHRM) enclose the F-box domain. Residues 282–313 (SEQSTEDETGSPAPESASSNAKRKPESDDEDT) form a disordered region. WD repeat units lie at residues 369 to 406 (GHTN…ELRT), 409 to 448 (GHES…STYT), 450 to 486 (HRGG…TCLL), 488 to 529 (GHTD…RTFH), 583 to 626 (ETQS…CLRT), 627 to 666 (FFGH…CERT), and 669 to 700 (GHSG…GFQS). The segment at 556 to 598 (NDNVSVTSGDSPAASPRGIPGLDAGTSETQSSPFGPAFDNGRP) is disordered.

Belongs to the WD repeat MET30/SCONB/SCON-2 family. In terms of assembly, component of the SCF(sconB) E3 ubiquitin ligase complex.

It functions in the pathway protein modification; protein ubiquitination. In terms of biological role, component of the SCF(sconB) E3 ubiquitin ligase complex involved in the regulation of sulfur metabolite repression, probably by mediating the inactivation or degradation of the metR transcription factor. This is Probable E3 ubiquitin ligase complex SCF subunit sconB (sconB) from Aspergillus clavatus (strain ATCC 1007 / CBS 513.65 / DSM 816 / NCTC 3887 / NRRL 1 / QM 1276 / 107).